Here is a 217-residue protein sequence, read N- to C-terminus: Large ribosomal subunit protein uL3 (217 aa).

The tract at residues 137 to 160 is disordered; it reads VSASHGSHRNHRKPGSIGASSTPS.

This sequence belongs to the universal ribosomal protein uL3 family. In terms of assembly, part of the 50S ribosomal subunit. Forms a cluster with proteins L14 and L19.

Its function is as follows. One of the primary rRNA binding proteins, it binds directly near the 3'-end of the 23S rRNA, where it nucleates assembly of the 50S subunit. The polypeptide is Large ribosomal subunit protein uL3 (Clavibacter sepedonicus (Clavibacter michiganensis subsp. sepedonicus)).